The primary structure comprises 337 residues: Trace amine-associated receptor 5 (337 aa).

At 1–38 (MRAVLLPGSGEQPAAFCYQVNGSCPRTVHPLAIRVLIY) the chain is on the extracellular side. N21 is a glycosylation site (N-linked (GlcNAc...) asparagine). Disulfide bonds link C24/C188 and C99/C192. The helical transmembrane segment at 39-59 (LACAVGMLITVLGNLFVVFAV) threads the bilayer. Topologically, residues 60 to 70 (SYFKVLHTPTN) are cytoplasmic. Residues 71-91 (FLLLSLALADMLLGLLVLPLS) traverse the membrane as a helical segment. Topologically, residues 92 to 109 (TVRSVESCWFFGDFLCRL) are extracellular. A helical transmembrane segment spans residues 110-130 (HTYLDTLFCLTSIFHLCFISI). The Cytoplasmic segment spans residues 131 to 154 (DRHCAICDPLLYPSKFTVRIALRY). Residues 155 to 175 (IAAGWGIPAAYTAFFLYTDVV) form a helical membrane-spanning segment. Residues 176–189 (ERALSQWLEEMPCV) are extracellular Loop 2 (ECL2). Residues 176-204 (ERALSQWLEEMPCVGSCQLLFNKFWGWLN) lie on the Extracellular side of the membrane. A helical membrane pass occupies residues 205 to 225 (FPAFFIPCLIMISLYLKIFVV). Over 226 to 253 (ATRQAQQIRTLSQSLSGAVKRERKAAKT) the chain is Cytoplasmic. Residues 254–274 (LGIAVGIYLVCWLPFTVDTLV) traverse the membrane as a helical segment. Over 275 to 284 (DSLLNFVTPP) the chain is Extracellular. Residues 285–307 (LVFDIFIWFAYFNSACNPIIYVF) form a helical membrane-spanning segment. Topologically, residues 308-337 (SYRWFRKALKLLLSREILSPRTQTADLFHD) are cytoplasmic.

Belongs to the G-protein coupled receptor 1 family.

It is found in the cell membrane. Its function is as follows. Olfactory receptor specific for trimethylamine, a trace amine enriched in the urine of male rats, playing a role in social behavior. Also activated by N-methylpiperidine. Trimethylamine is present at high concentration in the urine of male after puberty and acts as an attractant. Trimethylamine-binding causes a conformation change that triggers signaling via G(s)-class of G alpha proteins (GNAL or GNAS). Also required to provide olfactory input into limbic brain areas to regulate emotional behaviors likely via modulation of the serotonin system. The protein is Trace amine-associated receptor 5 of Rattus norvegicus (Rat).